A 926-amino-acid polypeptide reads, in one-letter code: Protein O-mannosyl-transferase Tmtc3 (926 aa).

Residues Met1–Ala26 form a disordered region. Over Met1–Glu36 the chain is Cytoplasmic. A helical transmembrane segment spans residues Phe37 to Val57. The Extracellular portion of the chain corresponds to Phe58–Ala114. The chain crosses the membrane as a helical span at residues Leu115–Trp135. Topologically, residues Arg136–Ala169 are cytoplasmic. Residues Phe170–Val190 traverse the membrane as a helical segment. The Extracellular portion of the chain corresponds to Gly191–Arg192. The chain crosses the membrane as a helical span at residues Ala193–Gly213. Residues Asp214–Asn222 are Cytoplasmic-facing. 2 helical membrane passes run Trp223–Leu239 and Cys240–Val259. The Cytoplasmic portion of the chain corresponds to His260 to Arg303. Residues Leu304–Ser324 traverse the membrane as a helical segment. Over Gln325–Gln345 the chain is Extracellular. A helical membrane pass occupies residues Leu346–Cys366. Over Cys367–Arg384 the chain is Cytoplasmic. The chain crosses the membrane as a helical span at residues Asn385–Thr405. The Extracellular segment spans residues Arg406–Gly419. Residues Trp420–Ala440 form a helical membrane-spanning segment. The Cytoplasmic segment spans residues Glu441–Arg442. A helical transmembrane segment spans residues Ile443–Gln463. At Arg464 to Ser926 the chain is on the extracellular side. 9 TPR repeats span residues Ala514–Asp547, Ile548–Ala581, Leu596–Tyr630, Val631–Asn664, Ala665–His698, Glu736–Phe769, Arg770–His803, Lys805–Asn838, and Thr839–Glu872. N-linked (GlcNAc...) asparagine glycans are attached at residues Asn609 and Asn645.

Belongs to the TMTC family.

Its subcellular location is the membrane. It localises to the endoplasmic reticulum. The enzyme catalyses a di-trans,poly-cis-dolichyl beta-D-mannosyl phosphate + L-seryl-[protein] = 3-O-(alpha-D-mannosyl)-L-seryl-[protein] + a di-trans,poly-cis-dolichyl phosphate + H(+). It catalyses the reaction a di-trans,poly-cis-dolichyl beta-D-mannosyl phosphate + L-threonyl-[protein] = 3-O-(alpha-D-mannosyl)-L-threonyl-[protein] + a di-trans,poly-cis-dolichyl phosphate + H(+). It functions in the pathway protein modification; protein glycosylation. In terms of biological role, transfers mannosyl residues to the hydroxyl group of serine or threonine residues. The protein is Protein O-mannosyl-transferase Tmtc3 of Drosophila melanogaster (Fruit fly).